Here is a 249-residue protein sequence, read N- to C-terminus: NAD kinase (249 aa).

The active-site Proton acceptor is the Asp-45. NAD(+) contacts are provided by residues 45–46 (DG), Arg-50, 110–111 (NE), Asp-138, and 149–154 (SGWGMS).

Belongs to the NAD kinase family. Requires a divalent metal cation as cofactor.

It is found in the cytoplasm. It carries out the reaction NAD(+) + ATP = ADP + NADP(+) + H(+). Functionally, involved in the regulation of the intracellular balance of NAD and NADP, and is a key enzyme in the biosynthesis of NADP. Catalyzes specifically the phosphorylation on 2'-hydroxyl of the adenosine moiety of NAD to yield NADP. The polypeptide is NAD kinase (Saccharolobus islandicus (strain Y.N.15.51 / Yellowstone #2) (Sulfolobus islandicus)).